The sequence spans 149 residues: Thioredoxin-like protein 4B (149 aa).

It belongs to the DIM1 family. In terms of assembly, homodimer. Interacts with the U5-102 kDa protein subunit of the spliceosome.

It localises to the nucleus. Its function is as follows. Essential role in pre-mRNA splicing. Required in cell cycle progression for S/G(2) transition. This is Thioredoxin-like protein 4B (TXNL4B) from Homo sapiens (Human).